The chain runs to 157 residues: Ribonuclease H (157 aa).

One can recognise an RNase H type-1 domain in the interval 1–146; it reads MPDLVAYTDG…ADELARAGMA (146 aa). Positions 9, 52, 74, and 138 each coordinate Mg(2+).

The protein belongs to the RNase H family. In terms of assembly, monomer. The cofactor is Mg(2+).

It is found in the cytoplasm. It carries out the reaction Endonucleolytic cleavage to 5'-phosphomonoester.. Its function is as follows. Endonuclease that specifically degrades the RNA of RNA-DNA hybrids. The chain is Ribonuclease H from Jannaschia sp. (strain CCS1).